The sequence spans 178 residues: uncharacterized protein (178 aa).

An N-terminal signal peptide occupies residues 1–19 (MINRKILLTSLLLIFTVLS). Active-site residues include Arg52, Glu60, and Arg94.

This sequence belongs to the thermonuclease family.

This is an uncharacterized protein from Haemophilus influenzae (strain ATCC 51907 / DSM 11121 / KW20 / Rd).